We begin with the raw amino-acid sequence, 228 residues long: Ribosomal RNA small subunit methyltransferase G (228 aa).

S-adenosyl-L-methionine-binding positions include G70, A121–E122, and R138.

This sequence belongs to the methyltransferase superfamily. RNA methyltransferase RsmG family.

It localises to the cytoplasm. Specifically methylates the N7 position of a guanine in 16S rRNA. In Thermotoga sp. (strain RQ2), this protein is Ribosomal RNA small subunit methyltransferase G.